A 259-amino-acid chain; its full sequence is tRNA (guanine-N(1)-)-methyltransferase (259 aa).

S-adenosyl-L-methionine-binding positions include G117 and 137 to 142; that span reads LGDFVL.

This sequence belongs to the RNA methyltransferase TrmD family. Homodimer.

Its subcellular location is the cytoplasm. The catalysed reaction is guanosine(37) in tRNA + S-adenosyl-L-methionine = N(1)-methylguanosine(37) in tRNA + S-adenosyl-L-homocysteine + H(+). Specifically methylates guanosine-37 in various tRNAs. In Polaromonas sp. (strain JS666 / ATCC BAA-500), this protein is tRNA (guanine-N(1)-)-methyltransferase.